Reading from the N-terminus, the 196-residue chain is ATP-dependent Clp protease proteolytic subunit (196 aa).

Ser-98 functions as the Nucleophile in the catalytic mechanism. Residue His-123 is part of the active site.

Belongs to the peptidase S14 family. As to quaternary structure, fourteen ClpP subunits assemble into 2 heptameric rings which stack back to back to give a disk-like structure with a central cavity, resembling the structure of eukaryotic proteasomes.

Its subcellular location is the cytoplasm. The enzyme catalyses Hydrolysis of proteins to small peptides in the presence of ATP and magnesium. alpha-casein is the usual test substrate. In the absence of ATP, only oligopeptides shorter than five residues are hydrolyzed (such as succinyl-Leu-Tyr-|-NHMec, and Leu-Tyr-Leu-|-Tyr-Trp, in which cleavage of the -Tyr-|-Leu- and -Tyr-|-Trp bonds also occurs).. Cleaves peptides in various proteins in a process that requires ATP hydrolysis. Has a chymotrypsin-like activity. Plays a major role in the degradation of misfolded proteins. ClpXP is involved in the complete degradation of the Site-2 clipped anti-sigma-W factor RsiW. This results in the release of SigW and the transcription activation of the genes under the control of the sigma-W factor. The chain is ATP-dependent Clp protease proteolytic subunit from Geobacillus kaustophilus (strain HTA426).